A 426-amino-acid polypeptide reads, in one-letter code: Putative competence-damage inducible protein (426 aa).

The protein belongs to the CinA family.

The sequence is that of Putative competence-damage inducible protein from Symbiobacterium thermophilum (strain DSM 24528 / JCM 14929 / IAM 14863 / T).